The primary structure comprises 167 residues: Claudin domain-containing protein 2 (167 aa).

Transmembrane regions (helical) follow at residues 7–27 (LQSGGILLSLVANVLMVLSTA), 59–79 (LAVTVACMVLAVGVGVVGMVM), 96–116 (TSAFLFLGGLLLLTALIGYTV), and 134–154 (WLALPFSILAGFCFLLADMIM).

Belongs to the PMP-22/EMP/MP20 family.

The protein localises to the membrane. The protein is Claudin domain-containing protein 2 (CLDND2) of Homo sapiens (Human).